A 357-amino-acid polypeptide reads, in one-letter code: Thiamine thiazole synthase 1, chloroplastic (357 aa).

The transit peptide at 1 to 51 (MSISAAGVATGLGANVELKSNVGSSSSSVAGVRLFTSRKAQLRRCAAPATS) directs the protein to the chloroplast. Substrate-binding positions include alanine 103, 123–124 (EQ), glycine 131, and alanine 196. A 2,3-didehydroalanine (Cys) modification is found at cysteine 225. Residues aspartate 227, histidine 242, methionine 294, and 304–306 (RMG) each bind substrate.

Belongs to the THI4 family. In terms of assembly, homooctamer. It depends on Fe cation as a cofactor. In terms of processing, during the catalytic reaction, a sulfide is transferred from Cys-225 to a reaction intermediate, generating a dehydroalanine residue.

The protein localises to the plastid. It is found in the chloroplast. It catalyses the reaction [ADP-thiazole synthase]-L-cysteine + glycine + NAD(+) = [ADP-thiazole synthase]-dehydroalanine + ADP-5-ethyl-4-methylthiazole-2-carboxylate + nicotinamide + 3 H2O + 2 H(+). Its function is as follows. Involved in biosynthesis of the thiamine precursor thiazole. Catalyzes the conversion of NAD and glycine to adenosine diphosphate 5-(2-hydroxyethyl)-4-methylthiazole-2-carboxylic acid (ADT), an adenylated thiazole intermediate. The reaction includes an iron-dependent sulfide transfer from a conserved cysteine residue of the protein to a thiazole intermediate. The enzyme can only undergo a single turnover, which suggests it is a suicide enzyme. May have additional roles in adaptation to various stress conditions and in DNA damage tolerance. This Physcomitrium patens (Spreading-leaved earth moss) protein is Thiamine thiazole synthase 1, chloroplastic.